The chain runs to 249 residues: Low affinity immunoglobulin gamma Fc region receptor III-A (249 aa).

The first 20 residues, 1–20 (MWYLLLPTALLLTVSSGVGA), serve as a signal peptide directing secretion. Topologically, residues 21-203 (GLQKAVVNLD…SPSSFLPWHQ (183 aa)) are extracellular. Ig-like C2-type domains follow at residues 31–103 (PEWV…QLDV) and 117–188 (FQEG…LQIS). Cystine bridges form between cysteine 46-cysteine 88 and cysteine 127-cysteine 171. Asparagine 55 and asparagine 62 each carry an N-linked (GlcNAc...) asparagine glycan. N-linked (GlcNAc...) asparagine glycosylation is present at asparagine 179. A helical membrane pass occupies residues 204–224 (ITFCLLIGLLFAIDTVLYFSV). Over 225–249 (QRSLQSSVAVYEEPKLHWSKEPQDK) the chain is Cytoplasmic. Tyrosine 235 is modified (phosphotyrosine).

Forms a heterooligomeric complex with ITAM-containing signaling subunits FCER1G. Interacts (via transmembrane domain) with signaling subunits; this interaction is a prerequisite for receptor complex expression on the cell surface and intracellular signal transduction. Binds the Fc region of antigen-complexed IgG. Post-translationally, N-glycosylated. In terms of processing, phosphorylated following receptor ligation.

Its subcellular location is the cell membrane. Receptor for the invariable Fc fragment of immunoglobulin gamma (IgG). Binds with intermediate affinity to both IgG2a and IgG2b. Can bind to IgG2a and IgG2b monomers. Does not display binding to IgG1 or IgG3. Recognizes neutralizing virus-specific IgGs displayed on the cell surface of infected cells and triggers antibody-dependent cellular cytotoxicity (ADCC). Confers protection to lethal influenza virus infection. On splenic dendritic cells, uptakes antigen immune complexes and efficiently divert them into MHC class I and II antigen presentation pathways to provide for superior priming of CD4-positive and CD8-positive T cell immune responses. Mediates neutrophil activation by IgG complexes redundantly with FCGR2A. Plays a role in promoting bone resorption by enhancing osteoclast differentiation following binding to IgG2a. Also acts as a receptor for the Fc region of immunoglobulin epsilon (IgE). Binds with low affinity to both the a and b allotypes of IgE. Has also been shown to bind to IgE allotype a only but not to allotype b. Binds aggregated IgE but not the monomeric form and bound monomeric IgG is readily displaced by IgE complexes. Binding to IgE promotes macrophage-mediated phagocytosis, antigen presentation to T cells, production of pro-inflammatory cytokines and the late phase of cutaneous allergic reactions. Mediates enhanced ADCC in response to afucosylated IgGs. This Rattus norvegicus (Rat) protein is Low affinity immunoglobulin gamma Fc region receptor III-A.